The following is a 210-amino-acid chain: 23.5 kDa heat shock protein, mitochondrial (210 aa).

Residues 1–20 constitute a mitochondrion transit peptide; the sequence is MASSSALALRRLLSSSTVAV. Residues 102-210 enclose the sHSP domain; sequence MGASGVRRGW…RNNIRHINVD (109 aa).

The protein belongs to the small heat shock protein (HSP20) family. As to quaternary structure, may form oligomeric structures.

It localises to the mitochondrion. This is 23.5 kDa heat shock protein, mitochondrial (HSP23.5) from Arabidopsis thaliana (Mouse-ear cress).